Consider the following 607-residue polypeptide: Developmental gene 1062 protein (607 aa).

3 disordered regions span residues 62 to 84, 334 to 451, and 568 to 602; these read LQGQ…HNNQ, ICDD…SNFQ, and DNNT…NDLL. The span at 334-363 shows a compositional bias: low complexity; that stretch reads ICDDSSNSSTPSLSSYSNGNNKYNNNNNDS. Residues 364-382 are compositionally biased toward acidic residues; the sequence is SESDESDDDDNNDDDDNDS. Composition is skewed to low complexity over residues 383–451 and 568–582; these read IDFN…SNFQ and DNNT…ISVN.

In Dictyostelium discoideum (Social amoeba), this protein is Developmental gene 1062 protein (DG1062).